The following is a 127-amino-acid chain: Urotensin-2 (127 aa).

An N-terminal signal peptide occupies residues 1–16; sequence MSKLFFCCLILAGSFC. Residues 17–111 constitute a propeptide that is removed on maturation; sequence SFRSLPIIVP…RLQSKDRKQF (95 aa). Cys-121 and Cys-126 are oxidised to a cystine.

Belongs to the urotensin-2 family. As to expression, central nervous system. Spinal cord.

The protein localises to the secreted. Functionally, involved in smooth muscle stimulating and ion mobilizing activities. It has a suggested role as a corticotropin-releasing factor. In Pelophylax ridibundus (Marsh frog), this protein is Urotensin-2 (UTS2).